The following is a 322-amino-acid chain: Atrochrysone carboxyl ACP thioesterase dmxR1 (322 aa).

4 residues coordinate Zn(2+): His-105, His-107, Asp-109, and His-110. Residue Asp-109 is the Proton donor/acceptor of the active site.

It belongs to the metallo-beta-lactamase superfamily. The cofactor is Zn(2+).

The catalysed reaction is atrochrysone carboxyl-[ACP] + H2O = atrochrysone carboxylate + holo-[ACP] + H(+). It participates in secondary metabolite biosynthesis. Functionally, atrochrysone carboxyl ACP thioesterase; part of the gene cluster that mediates the biosynthesis of the dimeric xanthones cryptosporioptides. The pathway begins with the synthesis of atrochrysone thioester by the polyketide synthase dmx-nrPKS. The atrochrysone carboxyl ACP thioesterase dmxR1 then breaks the thioester bond and releases the atrochrysone carboxylic acid from dmx-nrPKS. Atrochrysone carboxylic acid is decarboxylated by the decarboxylase dmxR15, and oxidized by the anthrone oxygenase dmxR16 to yield emodin. Emodin is then reduced to emodin hydroquinone by the oxidoreductase dmxR7. A-ring reduction by the short chain dehydrogenase dmxR18, dehydration by the scytalone dehydratase-like protein dmxR17 and probable spontaneous re-oxidation, results in overall deoxygenation to chrysophanol. Baeyer-Villiger oxidation by the Baeyer-Villiger monooxygenase (BVMO) dmxR6 then yields monodictylactone in equilibrium with monodictyphenone. In the case of the cryptosporioptides biosynthesis, monodictylactone is reduced at C-12 to an alcohol (by the short chain dehydrogenases dmxR12 or dmxR8) and hydroxylated at C-5 by dmxR9, yielding the electron-rich aromatic which could eliminate H(2)O to form the ortho-quinonemethide, followed by tautomerisation to paraquinone and complete the formal reduction to produce the 10-methylgroup. Conjugate addition of C-4a-OH to the resulting paraquinone by the monooxygenase dmxR10 then gives cyclohexadienone, which is then reduced at C-5 by the short chain dehydrogenase dmxR3 to give the dihydroxanthone. The 6,7-epoxide in the cryptosporioptides could be introduced by the cytochrome P450 monooxygenase dmxL3. The highly reducing PKS dmxL2 manufactures butyrate, which is further carboxylated by dmxL1 to form ethylmalonate. It is not yet clear whether the carboxylation occurs while the butyrate is attached to the ACP of dmxL2, but this unusual fungal metabolite could then be esterified to O-5 by the O-acetyltransferase dmxR13. Finally, dimerization performed by dmxR5 gives the observed dimers cryptosporioptides A, B and C as the final products of the pathway. This is Atrochrysone carboxyl ACP thioesterase dmxR1 from Cryptosporiopsis sp. (strain 8999).